A 427-amino-acid chain; its full sequence is Serine--tRNA ligase (427 aa).

235–237 (TAE) is a binding site for L-serine. ATP-binding positions include 266–268 (RRE) and Val282. Residue Glu289 coordinates L-serine. Residue 353–356 (EASS) participates in ATP binding. Ser389 provides a ligand contact to L-serine.

It belongs to the class-II aminoacyl-tRNA synthetase family. Type-1 seryl-tRNA synthetase subfamily. Homodimer. The tRNA molecule binds across the dimer.

The protein localises to the cytoplasm. The catalysed reaction is tRNA(Ser) + L-serine + ATP = L-seryl-tRNA(Ser) + AMP + diphosphate + H(+). It catalyses the reaction tRNA(Sec) + L-serine + ATP = L-seryl-tRNA(Sec) + AMP + diphosphate + H(+). It functions in the pathway aminoacyl-tRNA biosynthesis; selenocysteinyl-tRNA(Sec) biosynthesis; L-seryl-tRNA(Sec) from L-serine and tRNA(Sec): step 1/1. Functionally, catalyzes the attachment of serine to tRNA(Ser). Is also able to aminoacylate tRNA(Sec) with serine, to form the misacylated tRNA L-seryl-tRNA(Sec), which will be further converted into selenocysteinyl-tRNA(Sec). This chain is Serine--tRNA ligase, found in Chlorobium phaeobacteroides (strain BS1).